The chain runs to 407 residues: Tyrosine--tRNA ligase (407 aa).

Tyr35 provides a ligand contact to L-tyrosine. The 'HIGH' region motif lies at 40 to 49 (PTADSLHVGH). L-tyrosine is bound by residues Tyr168 and Gln172. The short motif at 228-232 (KMGKT) is the 'KMSKS' region element. Lys231 serves as a coordination point for ATP. The region spanning 341–405 (NLLVDLLVKC…RGKKNFNRIV (65 aa)) is the S4 RNA-binding domain.

This sequence belongs to the class-I aminoacyl-tRNA synthetase family. TyrS type 1 subfamily. In terms of assembly, homodimer.

Its subcellular location is the cytoplasm. It catalyses the reaction tRNA(Tyr) + L-tyrosine + ATP = L-tyrosyl-tRNA(Tyr) + AMP + diphosphate + H(+). In terms of biological role, catalyzes the attachment of tyrosine to tRNA(Tyr) in a two-step reaction: tyrosine is first activated by ATP to form Tyr-AMP and then transferred to the acceptor end of tRNA(Tyr). This chain is Tyrosine--tRNA ligase, found in Clostridium botulinum (strain Kyoto / Type A2).